We begin with the raw amino-acid sequence, 132 residues long: ATP synthase epsilon chain 1 (132 aa).

It belongs to the ATPase epsilon chain family. As to quaternary structure, F-type ATPases have 2 components, CF(1) - the catalytic core - and CF(0) - the membrane proton channel. CF(1) has five subunits: alpha(3), beta(3), gamma(1), delta(1), epsilon(1). CF(0) has three main subunits: a, b and c.

It is found in the cell inner membrane. Functionally, produces ATP from ADP in the presence of a proton gradient across the membrane. The protein is ATP synthase epsilon chain 1 of Cereibacter sphaeroides (strain ATCC 17023 / DSM 158 / JCM 6121 / CCUG 31486 / LMG 2827 / NBRC 12203 / NCIMB 8253 / ATH 2.4.1.) (Rhodobacter sphaeroides).